Here is a 200-residue protein sequence, read N- to C-terminus: Phospholipase A2 inhibitor CNF (200 aa).

Residues 1-19 (MKYLHTICLLFIFVARGNS) form the signal peptide. 8 disulfide bridges follow: Cys22-Cys46, Cys25-Cys32, Cys39-Cys67, Cys73-Cys94, Cys95-Cys100, Cys118-Cys143, Cys136-Cys165, and Cys169-Cys191. Asn176 carries N-linked (GlcNAc...) asparagine; partial glycosylation.

In terms of assembly, occurs as a mixture of oligomers. Tetrameric arrangement appears to be the predominant quaternary structure. Interacts with phospholipase A2 crotoxin basic subunit CBd; the interaction leads to dissociation of the CA-CB heterodimer and to inhibition of PLA2 activity of the CB subunit. Post-translationally, the carbohydrate moiety increases the inhibition capacity of CNF, but is not essential for activity and for oligomerization. Expressed by the liver.

It localises to the secreted. Functionally, inhibits the PLA2 activity of crotoxin (CTX) by replacing the acid subunit (CA) in the CTX complex. Displays a pro-inflammatory action through activation of important main signaling pathways for human leukocytes, in vitro. Abolishes both the muscle-paralyzing and muscle-damaging activities of CTX in mice phrenic nerve-diaphragm muscle preparations. This chain is Phospholipase A2 inhibitor CNF, found in Crotalus durissus terrificus (South American rattlesnake).